The chain runs to 954 residues: Glycine dehydrogenase (decarboxylating) (954 aa).

Lys706 bears the N6-(pyridoxal phosphate)lysine mark.

This sequence belongs to the GcvP family. The glycine cleavage system is composed of four proteins: P, T, L and H. It depends on pyridoxal 5'-phosphate as a cofactor.

The catalysed reaction is N(6)-[(R)-lipoyl]-L-lysyl-[glycine-cleavage complex H protein] + glycine + H(+) = N(6)-[(R)-S(8)-aminomethyldihydrolipoyl]-L-lysyl-[glycine-cleavage complex H protein] + CO2. Its function is as follows. The glycine cleavage system catalyzes the degradation of glycine. The P protein binds the alpha-amino group of glycine through its pyridoxal phosphate cofactor; CO(2) is released and the remaining methylamine moiety is then transferred to the lipoamide cofactor of the H protein. The chain is Glycine dehydrogenase (decarboxylating) from Thermosynechococcus vestitus (strain NIES-2133 / IAM M-273 / BP-1).